The following is a 235-amino-acid chain: Thaumatin I (235 aa).

The N-terminal stretch at 1-22 (MAATTCFFFLFPFLLLLTLSRA) is a signal peptide. Intrachain disulfides connect C31/C226, C78/C88, C93/C99, C143/C215, C148/C199, C156/C167, C171/C180, and C181/C186. Residues 230–235 (LELEDE) constitute a propeptide, removed in mature form.

Belongs to the thaumatin family.

It localises to the cytoplasmic vesicle. Taste-modifying protein; intensely sweet-tasting. It is 100000 times sweeter than sucrose on a molar basis. This Thaumatococcus daniellii (Katemfe) protein is Thaumatin I.